Reading from the N-terminus, the 358-residue chain is Pyruvate dehydrogenase E1 component subunit alpha (358 aa).

As to quaternary structure, heterodimer of an alpha and a beta chain. The cofactor is thiamine diphosphate.

It carries out the reaction N(6)-[(R)-lipoyl]-L-lysyl-[protein] + pyruvate + H(+) = N(6)-[(R)-S(8)-acetyldihydrolipoyl]-L-lysyl-[protein] + CO2. Functionally, the pyruvate dehydrogenase complex catalyzes the overall conversion of pyruvate to acetyl-CoA and CO(2). It contains multiple copies of three enzymatic components: pyruvate dehydrogenase (E1), dihydrolipoamide acetyltransferase (E2) and lipoamide dehydrogenase (E3). This chain is Pyruvate dehydrogenase E1 component subunit alpha (pdhA), found in Mycoplasma pneumoniae (strain ATCC 29342 / M129 / Subtype 1) (Mycoplasmoides pneumoniae).